A 224-amino-acid polypeptide reads, in one-letter code: Small ribosomal subunit protein uS3 (224 aa).

A KH type-2 domain is found at 38–106 (LREYVKEKLG…EVYLNVVEVR (69 aa)).

This sequence belongs to the universal ribosomal protein uS3 family. In terms of assembly, part of the 30S ribosomal subunit. Forms a tight complex with proteins S10 and S14.

Binds the lower part of the 30S subunit head. Binds mRNA in the 70S ribosome, positioning it for translation. In Anaeromyxobacter sp. (strain Fw109-5), this protein is Small ribosomal subunit protein uS3.